The sequence spans 388 residues: Protein SopA (388 aa).

This sequence belongs to the ParA family.

Functionally, this protein is essential for plasmid partition. It ensures the proper distribution of newly replicated plasmids to daughter cells during cell division. SopA is trans-acting. This is Protein SopA (sopA) from Escherichia coli O157:H7.